The chain runs to 402 residues: Nuclear hormone receptor family member nhr-96 (402 aa).

Positions 4 to 79 form a DNA-binding region, nuclear receptor; it reads FGLCAVCGQV…VGMDVKKIQQ (76 aa). 2 NR C4-type zinc fingers span residues 7 to 27 and 44 to 67; these read CAVC…CRSC and CVKA…LKRC. An NR LBD domain is found at 154–402; sequence NYYNSLELLT…FSDPEMFELT (249 aa).

The protein belongs to the nuclear hormone receptor family.

The protein resides in the nucleus. Functionally, orphan nuclear receptor. This chain is Nuclear hormone receptor family member nhr-96 (nhr-96), found in Caenorhabditis elegans.